Here is a 186-residue protein sequence, read N- to C-terminus: Acireductone dioxygenase (186 aa).

The segment at 1-21 is disordered; the sequence is MSRLSIFPDGSTSMDQSSPTP. Positions 10–20 are enriched in polar residues; that stretch reads GSTSMDQSSPT. The Fe(2+) site is built by H103, H105, E109, and H147. Ni(2+) contacts are provided by H103, H105, E109, and H147.

This sequence belongs to the acireductone dioxygenase (ARD) family. In terms of assembly, monomer. The cofactor is Fe(2+). Requires Ni(2+) as cofactor.

It catalyses the reaction 1,2-dihydroxy-5-(methylsulfanyl)pent-1-en-3-one + O2 = 3-(methylsulfanyl)propanoate + CO + formate + 2 H(+). The enzyme catalyses 1,2-dihydroxy-5-(methylsulfanyl)pent-1-en-3-one + O2 = 4-methylsulfanyl-2-oxobutanoate + formate + 2 H(+). The protein operates within amino-acid biosynthesis; L-methionine biosynthesis via salvage pathway; L-methionine from S-methyl-5-thio-alpha-D-ribose 1-phosphate: step 5/6. Functionally, catalyzes 2 different reactions between oxygen and the acireductone 1,2-dihydroxy-3-keto-5-methylthiopentene (DHK-MTPene) depending upon the metal bound in the active site. Fe-containing acireductone dioxygenase (Fe-ARD) produces formate and 2-keto-4-methylthiobutyrate (KMTB), the alpha-ketoacid precursor of methionine in the methionine recycle pathway. Ni-containing acireductone dioxygenase (Ni-ARD) produces methylthiopropionate, carbon monoxide and formate, and does not lie on the methionine recycle pathway. The protein is Acireductone dioxygenase of Synechococcus sp. (strain CC9902).